The primary structure comprises 322 residues: Porphobilinogen deaminase (322 aa).

An S-(dipyrrolylmethanemethyl)cysteine modification is found at Cys252.

This sequence belongs to the HMBS family. In terms of assembly, monomer. Requires dipyrromethane as cofactor.

It catalyses the reaction 4 porphobilinogen + H2O = hydroxymethylbilane + 4 NH4(+). Its pathway is porphyrin-containing compound metabolism; protoporphyrin-IX biosynthesis; coproporphyrinogen-III from 5-aminolevulinate: step 2/4. In terms of biological role, tetrapolymerization of the monopyrrole PBG into the hydroxymethylbilane pre-uroporphyrinogen in several discrete steps. The chain is Porphobilinogen deaminase from Caulobacter vibrioides (strain ATCC 19089 / CIP 103742 / CB 15) (Caulobacter crescentus).